Reading from the N-terminus, the 885-residue chain is Leucine--tRNA ligase (885 aa).

The 'HIGH' region motif lies at 48–58 (PYPSGKLHMGH). The 'KMSKS' region signature appears at 639–643 (TMSKS). Residue Lys642 coordinates ATP.

Belongs to the class-I aminoacyl-tRNA synthetase family.

The protein localises to the cytoplasm. The enzyme catalyses tRNA(Leu) + L-leucine + ATP = L-leucyl-tRNA(Leu) + AMP + diphosphate. In Bordetella avium (strain 197N), this protein is Leucine--tRNA ligase.